Here is a 151-residue protein sequence, read N- to C-terminus: Putative coiled-coil-helix-coiled-coil-helix domain-containing protein CHCHD2P9, mitochondrial (151 aa).

A mitochondrion-targeting transit peptide spans 1-9; the sequence is MPRGSRSRT. Disordered regions lie at residues 1–50 and 75–110; these read MPRG…AAAP and TQGH…PAQQ. Residues 10 to 26 are compositionally biased toward low complexity; it reads SRMAPPASRAPQMRAAP. Pro residues predominate over residues 27 to 38; that stretch reads RPAPVAQPPAAA. Low complexity-rich tracts occupy residues 39–50 and 100–110; these read PPSAVGSSAAAP and QEPQGTQPAQQ. Residues 111 to 151 enclose the CHCH domain; that stretch reads QQPCFYGIKQFLECAQNQGDIKLCEDFSKVLKQCRLAKGLA. 2 consecutive short sequence motifs (cx9C motif) follow at residues 114-124 and 134-144; these read CFYGIKQFLEC and CEDFSKVLKQC. Cystine bridges form between cysteine 114–cysteine 144 and cysteine 124–cysteine 134.

The protein resides in the mitochondrion. In Homo sapiens (Human), this protein is Putative coiled-coil-helix-coiled-coil-helix domain-containing protein CHCHD2P9, mitochondrial (CHCHD2P9).